Here is a 58-residue protein sequence, read N- to C-terminus: Probable ferredoxin (58 aa).

2 consecutive 4Fe-4S ferredoxin-type domains span residues 2–30 (VAKV…LNDD) and 31–58 (GIAT…ITIE). Positions 10, 13, 16, 20, 40, 43, 46, and 50 each coordinate [4Fe-4S] cluster.

The cofactor is [4Fe-4S] cluster.

Its function is as follows. Ferredoxins are iron-sulfur proteins that transfer electrons in a wide variety of metabolic reactions. The polypeptide is Probable ferredoxin (Methanosarcina thermophila).